Here is a 30-residue protein sequence, read N- to C-terminus: Phospholipase A2 acanmyotoxin-2 (30 aa).

Y28 and G30 together coordinate Ca(2+).

Ca(2+) serves as cofactor. In terms of processing, contains seven disulfide bonds. As to expression, expressed by the venom gland.

Its subcellular location is the secreted. The enzyme catalyses a 1,2-diacyl-sn-glycero-3-phosphocholine + H2O = a 1-acyl-sn-glycero-3-phosphocholine + a fatty acid + H(+). Its function is as follows. Snake venom phospholipase A2 (PLA2) that has myotoxic activity but no significant neurotoxicity. PLA2 catalyzes the calcium-dependent hydrolysis of the 2-acyl groups in 3-sn-phosphoglycerides. This chain is Phospholipase A2 acanmyotoxin-2, found in Acanthophis sp. (strain Seram) (Seram death adder).